Here is a 124-residue protein sequence, read N- to C-terminus: Small ribosomal subunit protein uS13 (124 aa).

The tract at residues 95 to 124 (GLPVRGQRTKTNARTRKGPKRTIAGKKKAR) is disordered.

The protein belongs to the universal ribosomal protein uS13 family. As to quaternary structure, part of the 30S ribosomal subunit. Forms a loose heterodimer with protein S19. Forms two bridges to the 50S subunit in the 70S ribosome.

Its function is as follows. Located at the top of the head of the 30S subunit, it contacts several helices of the 16S rRNA. In the 70S ribosome it contacts the 23S rRNA (bridge B1a) and protein L5 of the 50S subunit (bridge B1b), connecting the 2 subunits; these bridges are implicated in subunit movement. Contacts the tRNAs in the A and P-sites. This Mycobacterium marinum (strain ATCC BAA-535 / M) protein is Small ribosomal subunit protein uS13.